The following is a 452-amino-acid chain: mRNA export factor ICP27 homolog (452 aa).

The interval 42-164 is disordered; the sequence is EAIGSTPGED…RNDQTHDESY (123 aa). Residues 98–107 are compositionally biased toward basic and acidic residues; sequence SNHHGGRDVE. A compositionally biased stretch (basic residues) spans 129-144; the sequence is SRKHRDRSLSNRRRRP. The segment covering 154 to 164 has biased composition (basic and acidic residues); that stretch reads ERNDQTHDESY. Zn(2+) contacts are provided by Cys-335, His-417, Cys-421, and Cys-426. A CHC2-type zinc finger spans residues 335-426; that stretch reads CLLLNRDNDL…HQRECGRVEC (92 aa).

This sequence belongs to the HHV-1 ICP27 protein family. In terms of assembly, homodimer. Homodimerization is required for transactivation. Associates in a complex with RNA, and host export factors NXF1/TAP and ALYREF; these interactions allow nuclear export of viral transcripts. Interacts with three host shuttling SR proteins SRSF1, SRSF3 and SRSF7. Interacts with host SRPK1. Interacts with IE62; this interaction enhances IE62 transactivation. In terms of processing, phosphorylated in vitro by SRPK1.

It is found in the host cytoplasm. It localises to the host nucleus. In terms of biological role, multifunctional regulator of the expression of viral genes that mediates nuclear export of viral intronless mRNAs. This immediate early (EI) protein promotes the nuclear export of viral intronless mRNAs by interacting with mRNAs and host NXF1/TAP. This Varicella-zoster virus (strain Dumas) (HHV-3) protein is mRNA export factor ICP27 homolog.